The sequence spans 357 residues: Popeye domain-containing protein 1 (357 aa).

Residues 1–38 (MDTTAISPLTPLGVIPDLKNATSVPFNETACENWKEIH) lie on the Extracellular side of the membrane. N-linked (GlcNAc...) asparagine glycosylation is found at N20 and N27. A helical membrane pass occupies residues 39-59 (HLVFHVANICFAAGLVIPTTL). The Cytoplasmic segment spans residues 60–62 (NLH). A helical transmembrane segment spans residues 63-83 (MIFLRGLLTVGCALFIIWATL). The Extracellular portion of the chain corresponds to 84-89 (YRCALD). The helical transmembrane segment at 90-110 (IMIWNSVFLVVNLLHFIYLVY) threads the bilayer. The Cytoplasmic portion of the chain corresponds to 111-357 (KRRPIKIEKE…AEKLELQRLP (247 aa)). A compositionally biased stretch (low complexity) spans 309–323 (GTSSSSSLRPGRTSP). Residues 309-357 (GTSSSSSLRPGRTSPYLRTSAKMKPIEESVEDDVFEAPSAEKLELQRLP) are disordered. Residues 347-357 (SAEKLELQRLP) are compositionally biased toward basic and acidic residues.

Belongs to the popeye family. In terms of assembly, homodimer. Homodimerization requires the C-terminus cytoplasmic region. Expressed in the heart and skeletal muscle (at protein level). Isoform 1 and isoform 4: expressed in heart, muscle, brain, stomach, kidney, lung and spleen.

It localises to the lateral cell membrane. The protein localises to the cell junction. It is found in the tight junction. Its subcellular location is the membrane. The protein resides in the cell membrane. It localises to the sarcolemma. The protein localises to the caveola. Its function is as follows. Cell adhesion molecule involved in the establishment and/or maintenance of cell integrity. Involved in the formation and regulation of the tight junction (TJ) paracellular permeability barrier in epithelial cells. Induces primordial adhesive contact and aggregation of epithelial cells in a Ca(2+)-independent manner. Involved in epithelial movement during corneal sheet formation and regeneration. May play a role in VAMP3-mediated vesicular transport and recycling of receptor molecules. May play a role in the regulation of cell shape and movement by modulating the Rho-GTPase activity. May be involved in skeletal muscle and heart development as well as in the maintenance of heart function. May also be involved in striated muscle regeneration and in the regulation of cell spreading. The sequence is that of Popeye domain-containing protein 1 (POPDC1) from Gallus gallus (Chicken).